Consider the following 404-residue polypeptide: POU domain, class 2, transcription factor 3L (404 aa).

Disordered stretches follow at residues methionine 1 to phenylalanine 29 and threonine 44 to glutamate 67. The segment covering glycine 16 to phenylalanine 29 has biased composition (basic and acidic residues). The POU-specific domain maps to glutamine 187–glutamate 235. A DNA-binding region (homeobox) is located at residues lysine 259–valine 297. Residues methionine 346–leucine 367 form a disordered region. Positions serine 350–proline 363 are enriched in low complexity.

This sequence belongs to the POU transcription factor family. Class-2 subfamily.

It is found in the nucleus. Transcription factor that binds to the octamer motif (5'-ATTTGCAT-3') and regulates cell type-specific differentiation pathways. In Xenopus laevis (African clawed frog), this protein is POU domain, class 2, transcription factor 3L (pou2f3.L).